The chain runs to 200 residues: Dephospho-CoA kinase (200 aa).

The 198-residue stretch at 3–200 folds into the DPCK domain; sequence RIGLTGGIGS…LIAEILTRIK (198 aa). ATP is bound at residue 11 to 16; sequence GSGKST.

The protein belongs to the CoaE family.

It is found in the cytoplasm. The enzyme catalyses 3'-dephospho-CoA + ATP = ADP + CoA + H(+). The protein operates within cofactor biosynthesis; coenzyme A biosynthesis; CoA from (R)-pantothenate: step 5/5. In terms of biological role, catalyzes the phosphorylation of the 3'-hydroxyl group of dephosphocoenzyme A to form coenzyme A. The protein is Dephospho-CoA kinase of Corynebacterium efficiens (strain DSM 44549 / YS-314 / AJ 12310 / JCM 11189 / NBRC 100395).